A 386-amino-acid chain; its full sequence is MGRVKLKIKKLENTNGRQSTFAKRKNGILKKANELSILCDIDIVLLMFSPTGKAAICCGTRSSMEEVIAKFSQVTPQERTKRKFESLENLKKTFQKLDHDVNIREFIASSNSTVEDLSTQARILQARISEIHGRLSYWTEPDKINNVEHLGQLEISIRQSLDQLRAHKEHFGQQQQAMQIENANFVKDWSTCSMQDGIQIPLEQQLQSMSWILNSNTTNIVTEEHNSIPQREVECSASSSFGSYPGYFGTGKSPEMTIPGQETSFLDELNTGQLKQDTSSQQQFTNNNNITAYNPNLHNDMNHHQTLPPPPLPLTLPHAQVYIPMNQREYHMNGFFEAPPPDSSAYNDNTNQTRFGSSSSSLPCSISMFDEYLFSQVTKTKLSQRF.

Positions 1-53 (MGRVKLKIKKLENTNGRQSTFAKRKNGILKKANELSILCDIDIVLLMFSPTGK) constitute an MADS-box domain. A disordered region spans residues 341–360 (PDSSAYNDNTNQTRFGSSSS). Polar residues predominate over residues 344 to 356 (SAYNDNTNQTRFG).

In terms of assembly, forms heterodimers with AGL66 and AGL104. Expressed in pollen.

The protein resides in the nucleus. Its function is as follows. Probable transcription factor that forms heterodimers with the MADS-box proteins AGL66 and AGL104 and is involved in the regulation of pollen maturation at the late stages of pollen development and pollen tube growth. The protein is Agamous-like MADS-box protein AGL30 of Arabidopsis thaliana (Mouse-ear cress).